Consider the following 173-residue polypeptide: Enhancer of split mdelta protein (173 aa).

Positions 15-72 (YRKVTKPLLERKRRARMNLYLDELKDLIVDTMDAQGEQVSKLEKADILELTVNYLKAQ) constitute a bHLH domain. In terms of domain architecture, Orange spans 93–126 (FRAGYTQAAYEVSHIFSTVPGLDLKFGTHLMKQL). Residues 147-173 (VNLADQKRSKSPREEDIHHGEEVWRPW) are disordered. Residues 151-173 (DQKRSKSPREEDIHHGEEVWRPW) are compositionally biased toward basic and acidic residues. Residues 170-173 (WRPW) carry the WRPW motif motif.

Transcription repression requires formation of a complex with a corepressor protein (Groucho).

It localises to the nucleus. Functionally, transcriptional repressor of genes that require a bHLH protein for their transcription. May serve as a transcriptional regulator of the Achaete-scute complex (AS-C) genes. Contributes to the neural-epidermal lineage decision during early neurogenesis. As part of the Notch signaling pathway, required to maintain the self-renewal and identity of type II neuroblasts by regulating the expression of the transcriptional repressor erm. The polypeptide is Enhancer of split mdelta protein (Drosophila melanogaster (Fruit fly)).